A 356-amino-acid chain; its full sequence is Syntaxin-7A (356 aa).

Topologically, residues 1-333 (MYNNNNNFGG…NQKSSRNKMC (333 aa)) are cytoplasmic. Low complexity-rich tracts occupy residues 32–74 (NNNN…FDNN) and 207–224 (NNNS…NNQQ). Disordered regions lie at residues 32–88 (NNNN…NSDY) and 187–247 (EKTT…RRQQ). Basic and acidic residues predominate over residues 233 to 244 (EDEHQSLMESSR). The region spanning 259–321 (NSIIQERDEG…KEGVNHLREA (63 aa)) is the t-SNARE coiled-coil homology domain. A helical; Anchor for type IV membrane protein transmembrane segment spans residues 334 to 354 (WIVLILLIVCAVLGVILFFTL). Residues 355-356 (RK) are Vesicular-facing.

Belongs to the syntaxin family. In terms of assembly, component of the SNARE complex composed of syn7A, syn8A, vamp7A and vti1A. Interacts with nsfA, snpA and snpC.

It localises to the endosome membrane. Involved in the targeting and/or fusion of transport vesicles to their target membrane during transport of proteins from the early endosome to the lysosome. Required for fusion of late endosomes with lysosomes and homotypic lysosomal fusion. May be involved in protein trafficking from the plasma membrane to the early endosome (EE) as well as in homotypic fusion of endocytic organelles. In Dictyostelium discoideum (Social amoeba), this protein is Syntaxin-7A.